The following is an 836-amino-acid chain: MVGLISTSETLPKQESKSSSAPVSNFLSPNNLTEQTCSPLRAHSTFKEPVFLLSQRQYSHNSKILTELINSVKRPNKPDQNEEKSAVGIEEKSFKDEHLAQKKGLHHFADLKEIFLNKNLSTLDGLQDASLHDNIQSGKLDNPVISQNRRIVLEKLANPNSSKEYETIPTVENRHPLNKLSKTKTLAYEETINQLDETPGGTNYPMNKKKTLSSETNKYEYPQQSKFHECSQFASPRSSIVNGPRTLGKNSKRADDTARMASRMKPSNFNNNIQSSSYGHASQSTKLTSQRDNDHQKDLNFSPYKSIPLNNRPYSPMSEIVGFSGSTTPLDTYGNRPSGKKFNKNSKFRPPGSTISSYSSASTLRRLPRAPGSKVHAERQNSTFNSGISLRALRKEMGNTAPVSSNQLLKDADLVMENLSTRNTEKVLREVNILKRLRESCVAITAKSYDTLDERKIRSLTTFEYLEIKNFQKIYFTGSENCQKLSKQIPLDECNEALFDDDNGDYKAIQGDHLLYRYEIIDTVGKGSFGQVLKCIDHKRGQVVAIKVIKNRQKFHGQTLVEVGILKRLCEADPADKNNVIRYLSHFDFRGHLCIVTELLGSNLFDVIRENNYKGLPLIVVKSFALQGLQALRLLQGQNIIHCDLKPENLLLSHPLKARIKLIDFGSSCFYNEKVYTYLQSRFYRAPEIILGLEYGKEIDIWSFGCILAELFTGVPLFPGGNETEQLGYIMEVLGPPPMALIRNSTRSKAYFDSEGKPHPITDSHNRLLVPSTRTFSQLLNTKQASFLDFLSKCLKWDPKDRITVDSALQHEFILGKTSQKPMVSKGSHPLPDLPV.

4 disordered regions span residues 1–29 (MVGL…FLSP), 192–214 (INQL…TLSS), 230–307 (CSQF…YKSI), and 328–381 (TPLD…ERQN). 3 stretches are compositionally biased toward polar residues: residues 192–205 (INQL…TNYP), 232–241 (QFASPRSSIV), and 265–288 (KPSN…TKLT). The segment covering 289–298 (SQRDNDHQKD) has biased composition (basic and acidic residues). Basic residues predominate over residues 338–347 (SGKKFNKNSK). Over residues 353–362 (STISSYSSAS) the composition is skewed to low complexity. Positions 518–814 (YEIIDTVGKG…VDSALQHEFI (297 aa)) constitute a Protein kinase domain. ATP contacts are provided by residues 524-532 (VGKGSFGQV) and lysine 547. Aspartate 644 (proton acceptor) is an active-site residue. At tyrosine 678 the chain carries Phosphotyrosine.

Belongs to the protein kinase superfamily. CMGC Ser/Thr protein kinase family. MNB/DYRK subfamily.

The protein localises to the cytoplasm. The enzyme catalyses L-seryl-[protein] + ATP = O-phospho-L-seryl-[protein] + ADP + H(+). The catalysed reaction is L-threonyl-[protein] + ATP = O-phospho-L-threonyl-[protein] + ADP + H(+). Has a role in meiosis. This chain is Serine/threonine-protein kinase ppk5 (ppk5), found in Schizosaccharomyces pombe (strain 972 / ATCC 24843) (Fission yeast).